A 445-amino-acid chain; its full sequence is Arginine biosynthesis bifunctional protein ArgJ, mitochondrial (445 aa).

Substrate contacts are provided by T189, K215, T226, E312, N440, and S445. T226 functions as the Nucleophile in the catalytic mechanism.

The protein belongs to the ArgJ family. In terms of assembly, heterodimer of an alpha and a beta chain. Post-translationally, the alpha and beta chains are autoproteolytically processed from a single precursor protein within the mitochondrion.

Its subcellular location is the mitochondrion matrix. It carries out the reaction N(2)-acetyl-L-ornithine + L-glutamate = N-acetyl-L-glutamate + L-ornithine. The enzyme catalyses L-glutamate + acetyl-CoA = N-acetyl-L-glutamate + CoA + H(+). The protein operates within amino-acid biosynthesis; L-arginine biosynthesis; L-ornithine and N-acetyl-L-glutamate from L-glutamate and N(2)-acetyl-L-ornithine (cyclic): step 1/1. It participates in amino-acid biosynthesis; L-arginine biosynthesis; N(2)-acetyl-L-ornithine from L-glutamate: step 1/4. In terms of biological role, catalyzes two activities which are involved in the cyclic version of arginine biosynthesis: the synthesis of acetylglutamate from glutamate and acetyl-CoA, and of ornithine by transacetylation between acetylornithine and glutamate. This chain is Arginine biosynthesis bifunctional protein ArgJ, mitochondrial, found in Schizosaccharomyces pombe (strain 972 / ATCC 24843) (Fission yeast).